Consider the following 284-residue polypeptide: Bifunctional protein FolD (284 aa).

NADP(+) is bound by residues 166–168 (GAS) and Ile232.

It belongs to the tetrahydrofolate dehydrogenase/cyclohydrolase family. Homodimer.

It carries out the reaction (6R)-5,10-methylene-5,6,7,8-tetrahydrofolate + NADP(+) = (6R)-5,10-methenyltetrahydrofolate + NADPH. The catalysed reaction is (6R)-5,10-methenyltetrahydrofolate + H2O = (6R)-10-formyltetrahydrofolate + H(+). Its pathway is one-carbon metabolism; tetrahydrofolate interconversion. Functionally, catalyzes the oxidation of 5,10-methylenetetrahydrofolate to 5,10-methenyltetrahydrofolate and then the hydrolysis of 5,10-methenyltetrahydrofolate to 10-formyltetrahydrofolate. This chain is Bifunctional protein FolD, found in Shewanella sediminis (strain HAW-EB3).